Consider the following 714-residue polypeptide: Fatty acid oxidation complex subunit alpha (714 aa).

Positions 1–190 (MEMASAFTLN…KLGLVDDVVP (190 aa)) are enoyl-CoA hydratase. Residues 306-714 (APLNSVGILG…FWKTTATDLQ (409 aa)) are 3-hydroxyacyl-CoA dehydrogenase.

It in the N-terminal section; belongs to the enoyl-CoA hydratase/isomerase family. The protein in the central section; belongs to the 3-hydroxyacyl-CoA dehydrogenase family. Heterotetramer of two alpha chains (FadJ) and two beta chains (FadI).

It localises to the cytoplasm. It carries out the reaction a (3S)-3-hydroxyacyl-CoA = a (2E)-enoyl-CoA + H2O. The enzyme catalyses a 4-saturated-(3S)-3-hydroxyacyl-CoA = a (3E)-enoyl-CoA + H2O. It catalyses the reaction a (3S)-3-hydroxyacyl-CoA + NAD(+) = a 3-oxoacyl-CoA + NADH + H(+). The catalysed reaction is (3S)-3-hydroxybutanoyl-CoA = (3R)-3-hydroxybutanoyl-CoA. Its pathway is lipid metabolism; fatty acid beta-oxidation. Catalyzes the formation of a hydroxyacyl-CoA by addition of water on enoyl-CoA. Also exhibits 3-hydroxyacyl-CoA epimerase and 3-hydroxyacyl-CoA dehydrogenase activities. This is Fatty acid oxidation complex subunit alpha from Escherichia coli O6:H1 (strain CFT073 / ATCC 700928 / UPEC).